Consider the following 627-residue polypeptide: Sodium- and chloride-dependent GABA transporter 3 (627 aa).

A disordered region spans residues 1 to 36 (MTAEQALPLGNGKAAEEARGSEALGGGGGGAAGTRE). The Cytoplasmic portion of the chain corresponds to 1–53 (MTAEQALPLGNGKAAEEARGSEALGGGGGGAAGTREARDKAVHERGHWNNKVE). Residue Ser-21 is modified to Phosphoserine. Over residues 23 to 32 (ALGGGGGGAA) the composition is skewed to gly residues. A run of 3 helical transmembrane segments spans residues 54 to 74 (FVLS…FPYL), 82 to 101 (AFLI…VFFL), and 126 to 146 (GIGY…IIIL). Residues 147–220 (AWAIFYLSNC…DGIEHIGNLR (74 aa)) lie on the Extracellular side of the membrane. Residues Asn-182, Asn-185, and Asn-193 are each glycosylated (N-linked (GlcNAc...) asparagine). 9 helical membrane passes run 221 to 239 (WELA…FCIW), 248 to 265 (VVYV…ILLI), 301 to 318 (IFFS…LGSY), 330 to 351 (IMLC…FSVL), 384 to 403 (MPLS…FLGL), 433 to 451 (LLIL…VMLT), 468 to 488 (GMCL…VYGS), 509 to 528 (WCWK…FFLV), and 548 to 566 (IGWL…WIFI). Topologically, residues 567–627 (KLWKTEGTLP…SAITEKETHF (61 aa)) are cytoplasmic.

It belongs to the sodium:neurotransmitter symporter (SNF) (TC 2.A.22) family. SLC6A11 subfamily. In terms of tissue distribution, brain and retina. Expressed predominantly within neurons. Expressed in the hippocampus (at protein level).

Its subcellular location is the cell membrane. The catalysed reaction is 4-aminobutanoate(out) + chloride(out) + 2 Na(+)(out) = 4-aminobutanoate(in) + chloride(in) + 2 Na(+)(in). It catalyses the reaction taurine(out) + chloride(out) + 2 Na(+)(out) = taurine(in) + chloride(in) + 2 Na(+)(in). It carries out the reaction beta-alanine(out) + chloride(out) + 2 Na(+)(out) = beta-alanine(in) + chloride(in) + 2 Na(+)(in). The enzyme catalyses hypotaurine(out) + chloride(out) + 2 Na(+)(out) = hypotaurine(in) + chloride(in) + 2 Na(+)(in). With respect to regulation, GABA transport is inhibited by beta-alanine. Its function is as follows. Mediates sodium- and chloride-dependent transport of gamma-aminobutyric acid (GABA). Can also mediate transport of beta-alanine and to a lower extent that of taurine and hypotaurine. The protein is Sodium- and chloride-dependent GABA transporter 3 (Slc6a11) of Rattus norvegicus (Rat).